The following is an 865-amino-acid chain: Anaphase-promoting complex subunit 6 (865 aa).

TPR repeat units follow at residues 11-42, 46-75, and 88-149; these read IEKQ…LNLV, SKEY…LIQK, and EDYQ…LQIL. A disordered region spans residues 153 to 293; that stretch reads NDSSENMDDE…NNNNNNNNNF (141 aa). The segment covering 183 to 202 has biased composition (acidic residues); it reads NCDDDDDDDDDDDDDDDDEK. Over residues 249–292 the composition is skewed to low complexity; the sequence is NKNNNKNNNNNNNNNNNNNNNNNNNNNNNNNNNNNNNNNNNNNN. TPR repeat units lie at residues 300–331, 336–359, 366–438, 478–506, 515–542, 573–602, 607–635, 642–670, and 675–709; these read IRSS…ALLT, FEAF…LLEK, DSWI…DIST, DIQT…ILKQ, CLMV…LVDS, AISW…STTL, GASW…TSSR, LPLL…AKDI, and PMIF…KIKS. Residues 403–434 are compositionally biased toward low complexity; that stretch reads SNNNTFGANNNNNNNNNNNNNNNNNNNNNSNN. Residues 403–436 are disordered; it reads SNNNTFGANNNNNNNNNNNNNNNNNNNNNSNNDI. The segment at 738–767 is disordered; that stretch reads GIGNNNNNNNNRRTTTTTTTTSNNQKKNSS. 2 TPR repeats span residues 777 to 809 and 814 to 843; these read ESWE…SLSL and PSTY…SLSI.

The protein belongs to the APC6/CDC16 family. In terms of assembly, the APC/C is composed of at least 13 subunits that stay tightly associated throughout the cell cycle: anapc1, anapc2, anapc3, anapc4, anapc5, anapc6, anapc7, anapc8, anapc10, anapc11, cdc20, cdc26 and cdh1.

It is found in the nucleus. Its pathway is protein modification; protein ubiquitination. Component of the anaphase promoting complex/cyclosome (APC/C), a cell cycle-regulated E3 ubiquitin-protein ligase complex that controls progression through mitosis and the G1 phase of the cell cycle. This chain is Anaphase-promoting complex subunit 6 (anapc6), found in Dictyostelium discoideum (Social amoeba).